The sequence spans 344 residues: Protein pelota homolog (344 aa).

Belongs to the eukaryotic release factor 1 family. Pelota subfamily. In terms of assembly, monomer. A divalent metal cation serves as cofactor.

It is found in the cytoplasm. Its function is as follows. May function in recognizing stalled ribosomes, interact with stem-loop structures in stalled mRNA molecules, and effect endonucleolytic cleavage of the mRNA. May play a role in the release non-functional ribosomes and degradation of damaged mRNAs. Has endoribonuclease activity. The sequence is that of Protein pelota homolog from Archaeoglobus fulgidus (strain ATCC 49558 / DSM 4304 / JCM 9628 / NBRC 100126 / VC-16).